Consider the following 169-residue polypeptide: Mu-like prophage FluMu host-nuclease inhibitor protein gam (169 aa).

It to phage Mu protein gam.

Its function is as follows. Protects linear double-stranded DNA of Mu genome from exonuclease degradation. This chain is Mu-like prophage FluMu host-nuclease inhibitor protein gam, found in Haemophilus influenzae (strain ATCC 51907 / DSM 11121 / KW20 / Rd).